A 557-amino-acid chain; its full sequence is Potassium-transporting ATPase potassium-binding subunit (557 aa).

12 helical membrane-spanning segments follow: residues 5 to 25 (GFLLIATFLLVLMVLARPLGS), 63 to 83 (LCAILGLNMLGLAVLFFMLLG), 132 to 152 (GLTVQNFLSAASGIAVIFALI), 170 to 190 (LLRITLWVLVPVALLIALFFI), 253 to 273 (FVQMLAIFLIPTALCFAFGEV), 283 to 303 (LLWAMSVIFVICVGVVMWAEV), 329 to 349 (VLVSSLFAVVTTAASCGAVIA), 356 to 376 (ALGGMVPMWLMQIGEVVFGGV), 379 to 399 (GLYGMMLFVLLAVFIAGLMIG), 416 to 436 (LTALAILVTPTLVLMGAALAM), 484 to 504 (LLAFCMFVGRFGVIIPVMAIA), and 526 to 546 (LFVGLLIGTVLLVGALTFIPA).

The protein belongs to the KdpA family. In terms of assembly, the system is composed of three essential subunits: KdpA, KdpB and KdpC.

It is found in the cell inner membrane. In terms of biological role, part of the high-affinity ATP-driven potassium transport (or Kdp) system, which catalyzes the hydrolysis of ATP coupled with the electrogenic transport of potassium into the cytoplasm. This subunit binds the periplasmic potassium ions and delivers the ions to the membrane domain of KdpB through an intramembrane tunnel. The polypeptide is Potassium-transporting ATPase potassium-binding subunit (Escherichia coli O139:H28 (strain E24377A / ETEC)).